We begin with the raw amino-acid sequence, 557 residues long: Dihydroxy-acid dehydratase (557 aa).

Cys50 is a binding site for [2Fe-2S] cluster. Asp82 contributes to the Mg(2+) binding site. Residue Cys123 participates in [2Fe-2S] cluster binding. Mg(2+)-binding residues include Asp124 and Lys125. Residue Lys125 is modified to N6-carboxylysine. Cys195 contacts [2Fe-2S] cluster. Mg(2+) is bound at residue Glu447. Ser473 serves as the catalytic Proton acceptor.

This sequence belongs to the IlvD/Edd family. In terms of assembly, homodimer. Requires [2Fe-2S] cluster as cofactor. Mg(2+) serves as cofactor.

The enzyme catalyses (2R)-2,3-dihydroxy-3-methylbutanoate = 3-methyl-2-oxobutanoate + H2O. It carries out the reaction (2R,3R)-2,3-dihydroxy-3-methylpentanoate = (S)-3-methyl-2-oxopentanoate + H2O. Its pathway is amino-acid biosynthesis; L-isoleucine biosynthesis; L-isoleucine from 2-oxobutanoate: step 3/4. The protein operates within amino-acid biosynthesis; L-valine biosynthesis; L-valine from pyruvate: step 3/4. Functions in the biosynthesis of branched-chain amino acids. Catalyzes the dehydration of (2R,3R)-2,3-dihydroxy-3-methylpentanoate (2,3-dihydroxy-3-methylvalerate) into 2-oxo-3-methylpentanoate (2-oxo-3-methylvalerate) and of (2R)-2,3-dihydroxy-3-methylbutanoate (2,3-dihydroxyisovalerate) into 2-oxo-3-methylbutanoate (2-oxoisovalerate), the penultimate precursor to L-isoleucine and L-valine, respectively. The polypeptide is Dihydroxy-acid dehydratase (Burkholderia thailandensis (strain ATCC 700388 / DSM 13276 / CCUG 48851 / CIP 106301 / E264)).